A 247-amino-acid polypeptide reads, in one-letter code: Adenosylcobinamide-GDP ribazoletransferase (247 aa).

The next 5 helical transmembrane spans lie at 34–54 (IITF…VFMV), 59–79 (CGAP…TGGF), 113–133 (GGLA…ELAL), 138–158 (ILAS…LLMY), and 194–214 (VLLP…AIFI).

Belongs to the CobS family. It depends on Mg(2+) as a cofactor.

It localises to the cell inner membrane. It catalyses the reaction alpha-ribazole + adenosylcob(III)inamide-GDP = adenosylcob(III)alamin + GMP + H(+). The catalysed reaction is alpha-ribazole 5'-phosphate + adenosylcob(III)inamide-GDP = adenosylcob(III)alamin 5'-phosphate + GMP + H(+). It participates in cofactor biosynthesis; adenosylcobalamin biosynthesis; adenosylcobalamin from cob(II)yrinate a,c-diamide: step 7/7. Functionally, joins adenosylcobinamide-GDP and alpha-ribazole to generate adenosylcobalamin (Ado-cobalamin). Also synthesizes adenosylcobalamin 5'-phosphate from adenosylcobinamide-GDP and alpha-ribazole 5'-phosphate. The chain is Adenosylcobinamide-GDP ribazoletransferase from Escherichia coli O45:K1 (strain S88 / ExPEC).